We begin with the raw amino-acid sequence, 384 residues long: 4-hydroxy-3-methylbut-2-en-1-yl diphosphate synthase (flavodoxin) (384 aa).

Residues C280, C283, C315, and E322 each coordinate [4Fe-4S] cluster.

This sequence belongs to the IspG family. [4Fe-4S] cluster is required as a cofactor.

The catalysed reaction is (2E)-4-hydroxy-3-methylbut-2-enyl diphosphate + oxidized [flavodoxin] + H2O + 2 H(+) = 2-C-methyl-D-erythritol 2,4-cyclic diphosphate + reduced [flavodoxin]. It participates in isoprenoid biosynthesis; isopentenyl diphosphate biosynthesis via DXP pathway; isopentenyl diphosphate from 1-deoxy-D-xylulose 5-phosphate: step 5/6. In terms of biological role, converts 2C-methyl-D-erythritol 2,4-cyclodiphosphate (ME-2,4cPP) into 1-hydroxy-2-methyl-2-(E)-butenyl 4-diphosphate. The protein is 4-hydroxy-3-methylbut-2-en-1-yl diphosphate synthase (flavodoxin) of Frankia alni (strain DSM 45986 / CECT 9034 / ACN14a).